Here is a 156-residue protein sequence, read N- to C-terminus: Ribosomal RNA large subunit methyltransferase H (156 aa).

Residues Leu-73, Gly-104, and 123–128 (ISSLTL) each bind S-adenosyl-L-methionine.

This sequence belongs to the RNA methyltransferase RlmH family. In terms of assembly, homodimer.

It is found in the cytoplasm. The catalysed reaction is pseudouridine(1915) in 23S rRNA + S-adenosyl-L-methionine = N(3)-methylpseudouridine(1915) in 23S rRNA + S-adenosyl-L-homocysteine + H(+). Specifically methylates the pseudouridine at position 1915 (m3Psi1915) in 23S rRNA. The polypeptide is Ribosomal RNA large subunit methyltransferase H (Herminiimonas arsenicoxydans).